Reading from the N-terminus, the 210-residue chain is MPHLLHLDSSADLATSRSRAVTAAFADTWRARGEEYTVTHRDLHRDPLPHFADAEQHWPAAARRPGANPPAEQDALTATLHAEVLAADVVLVGAPLYNYTVPSTLKVWLDHLHIPGVLAGEGSQPLAGRPAVVVSSRGATYDAGSPTEGWDHGVPVLRIVLGNSLGMDVHVVQTSATLADRLPEMAALKERGAAEFQAALAAARELARTL.

Residues Ser10 and 16–18 (SRS) contribute to the FMN site.

Belongs to the azoreductase type 1 family. As to quaternary structure, homodimer. It depends on FMN as a cofactor.

The enzyme catalyses 2 a quinone + NADH + H(+) = 2 a 1,4-benzosemiquinone + NAD(+). It carries out the reaction N,N-dimethyl-1,4-phenylenediamine + anthranilate + 2 NAD(+) = 2-(4-dimethylaminophenyl)diazenylbenzoate + 2 NADH + 2 H(+). Its function is as follows. Quinone reductase that provides resistance to thiol-specific stress caused by electrophilic quinones. In terms of biological role, also exhibits azoreductase activity. Catalyzes the reductive cleavage of the azo bond in aromatic azo compounds to the corresponding amines. The chain is FMN-dependent NADH:quinone oxidoreductase from Kineococcus radiotolerans (strain ATCC BAA-149 / DSM 14245 / SRS30216).